Reading from the N-terminus, the 149-residue chain is Oocyte-expressed protein homolog (149 aa).

Positions 1-22 are disordered; that stretch reads MVDDAGAAESQRGKQTPAHSLE. Residues 49–110 form the KH; atypical domain; the sequence is PLVFYLEAWL…RVQNRVKSML (62 aa).

This sequence belongs to the KHDC1 family. In terms of assembly, component of the subcortical maternal complex (SCMC), at least composed of NLRP5, KHDC3L, OOEP, and TLE6 isoform 1. Within the complex, interacts with NLRP5, KHDC3L and TLE6 isoform 1. As part of the SCMC interacts with the SCMC-associated protein NLRP4F. The SCMC may facilitate translocation of its components between the nuclear and cytoplasmic compartments. Forms a scaffold complex with KHDC3L/FILIA, and interacts with BLM and TRIM25 at DNA replication forks.

The protein resides in the cytoplasm. The protein localises to the nucleus. Its function is as follows. Component of the subcortical maternal complex (SCMC), a multiprotein complex that plays a key role in early embryonic development. The SCMC complex is a structural constituent of cytoplasmic lattices, which consist in fibrous structures found in the cytoplasm of oocytes and preimplantation embryos. They are required to store maternal proteins critical for embryonic development, such as proteins that control epigenetic reprogramming of the preimplantation embryo, and prevent their degradation or activation. As part of the OOEP-KHDC3 scaffold, recruits BLM and TRIM25 to DNA replication forks, thereby promoting the ubiquitination of BLM by TRIM25, enhancing BLM retainment at replication forks and therefore promoting stalled replication fork restart. Positively regulates the homologous recombination-mediated DNA double-strand break (DSB) repair pathway by regulating ATM activation and RAD51 recruitment to DSBs in oocytes. Thereby contributes to oocyte survival and the resumption and completion of meiosis. This chain is Oocyte-expressed protein homolog, found in Homo sapiens (Human).